The following is a 134-amino-acid chain: RuBisCO chaperone RbcX (134 aa).

A disordered region spans residues 97–134 (SNGNHRRSLLERLTQVDSSSTDQTEPNPGESDTSEDSE). The span at 111-122 (QVDSSSTDQTEP) shows a compositional bias: polar residues.

Belongs to the RbcX family. As to quaternary structure, homodimer (RbcX2). Interacts with the exposed C-terminal peptide of RbcL ('Glu-459-Asp-468'); binds 2 RbcL peptides per RbcX2, stapling them into an RbcL2 dimer. A slightly longer peptide binds with a higher affinity, but no long-term stable interaction with RbcL is detected. Contacts a second RbcL monomer via its peripheral polar surface.

It is found in the carboxysome. The protein localises to the cytoplasm. Its function is as follows. An RbcL-specific chaperone. Required for assembly of the RbcL8 core, acting downstream of the major chaperonin (GroEL-GroES). Acts on newly folded RbcL, has a transient dynamic interaction with RbcL and is eventually displaced by RbcS. The central cleft of the RbcX homodimer (RbcX2) binds the C-terminus of an RbcL monomer, stabilizing the C-terminus and probably preventing its reassociation with chaperonin GroEL-ES. At the same time the peripheral region of RbcX2 binds a second RbcL monomer, bridging the RbcL homodimers in the correct orientation. The RbcX2(2)-bound RbcL dimers then assemble into the RbcL8 core (RbcL8-(RbcX2)8). RbcS binding triggers the release of RbcX2. Required for optimal reconstitution of RuBisCO into its RbcL8S8 holoenzyme form upon expression of rbcL-rbcS subunits in E.coli, and probably also in situ. A frameshift mutation that replaces half the protein reduces accumulation of both RbcL and RbcS subunits and halves activity of RuBisCO in situ and in E.coli. This chain is RuBisCO chaperone RbcX, found in Picosynechococcus sp. (strain ATCC 27264 / PCC 7002 / PR-6) (Agmenellum quadruplicatum).